Consider the following 533-residue polypeptide: Metallothionein expression activator (533 aa).

2 consecutive C2H2-type zinc fingers follow at residues 443-472 (YVCLYNGCNKRIARKYNVESHIQTHLSDRP) and 473-500 (YRCDLCKAGFVRHHDLKRHLRIHENGRP). The C2H2-type 3; atypical zinc finger occupies 501-524 (YVCECLKRFNRLDALNRHKQRNIC).

It localises to the nucleus. Regulates the transcription of genes required for cell separation. The sequence is that of Metallothionein expression activator (ace2) from Schizosaccharomyces pombe (strain 972 / ATCC 24843) (Fission yeast).